The sequence spans 148 residues: Large ribosomal subunit protein bL9 (148 aa).

It belongs to the bacterial ribosomal protein bL9 family.

Binds to the 23S rRNA. The protein is Large ribosomal subunit protein bL9 of Caldicellulosiruptor bescii (strain ATCC BAA-1888 / DSM 6725 / KCTC 15123 / Z-1320) (Anaerocellum thermophilum).